Reading from the N-terminus, the 869-residue chain is Phosphatidylethanolamine N-methyltransferase (869 aa).

The residue at position 2 (Ser-2) is an N-acetylserine. Over 2-55 the chain is Lumenal; that stretch reads SSCKTTLSEMVGSVTKDRGTINVEARTRSSNVTFKPPVTHDMVRSLFDPTLKKS. The helical transmembrane segment at 56 to 76 threads the bilayer; sequence LLEKCIALAIISNFFICYWVF. At 77–86 the chain is on the cytoplasmic side; that stretch reads QRFGLQFTKY. Residues 87 to 107 form a helical membrane-spanning segment; that stretch reads FFLVQYLFWRIAYNLGIGLVL. The Lumenal portion of the chain corresponds to 108 to 187; that stretch reads HYQSHYETLT…EINVWLIFRQ (80 aa). The chain crosses the membrane as a helical span at residues 188–208; that stretch reads FVDLILMQDFVTYIIYVYLSI. Residues 209 to 212 are Cytoplasmic-facing; that stretch reads PYSW. The chain crosses the membrane as a helical span at residues 213–233; it reads VQIFNWRSLLGVILILFNIWV. Over 234-258 the chain is Lumenal; the sequence is KLDAHRVVKDYAWYWGDFFFLEESE. The chain crosses the membrane as a helical span at residues 259-279; that stretch reads LIFDGVFNISPHPMYSIGYLG. The Cytoplasmic segment spans residues 280 to 291; the sequence is YYGLSLICNDYK. A helical transmembrane segment spans residues 292–310; the sequence is VLLVSVFGHYSQFLFLKYV. Residues 311–362 lie on the Lumenal side of the membrane; sequence ENPHIERTYGDGTDSDSQMNSRIDDLISKENYDYSRPLINMGLSFNNFNKLR. Residues 363 to 383 form a helical membrane-spanning segment; that stretch reads FTDYFTIGTVAALMLGTIMNA. The Cytoplasmic segment spans residues 384 to 389; it reads RFINLN. A helical transmembrane segment spans residues 390 to 410; the sequence is YLFITVFVTKLVSWLFISTIL. The Lumenal portion of the chain corresponds to 411–439; sequence YKQSQSKWFTRLFLENGYTQVYSYEQWQF. A helical membrane pass occupies residues 440–460; the sequence is IYNYYLVLTYTLMIIHTGLQI. Residues 461 to 463 are Cytoplasmic-facing; sequence WSN. A helical transmembrane segment spans residues 464 to 484; that stretch reads FSNINNSQLIFGLILVALQTW. The Lumenal segment spans residues 485-534; the sequence is CDKETRLAISDFGWFYGDFFLSNYISTRKLTSQGIYRYLNHPEAVLGVVG. A helical transmembrane segment spans residues 535 to 555; the sequence is VWGTVLMTNFAVTNIILAVLW. Residues 556 to 869 lie on the Cytoplasmic side of the membrane; sequence TLTNFILVKF…DIKQTLDSLA (314 aa).

The protein belongs to the class VI-like SAM-binding methyltransferase superfamily. CHO2 family.

It is found in the endoplasmic reticulum membrane. It carries out the reaction a 1,2-diacyl-sn-glycero-3-phosphoethanolamine + S-adenosyl-L-methionine = a 1,2-diacyl-sn-glycero-3-phospho-N-methylethanolamine + S-adenosyl-L-homocysteine + H(+). It functions in the pathway phospholipid metabolism; phosphatidylcholine biosynthesis. Its function is as follows. Catalyzes the first step of the methylation pathway of phosphatidylcholine biosynthesis, the SAM-dependent methylation of phosphatidylethanolamine (PE) to phosphatidylmonomethylethanolamine (PMME). Preferentially converts di-C16:1 substrates. In Saccharomyces cerevisiae (strain ATCC 204508 / S288c) (Baker's yeast), this protein is Phosphatidylethanolamine N-methyltransferase.